The sequence spans 320 residues: Cytochrome f (320 aa).

An N-terminal signal peptide occupies residues 1–35; sequence MENRNTFSWVKEQITRSISVSIMIYVITRTSISNA. 4 residues coordinate heme: Tyr-36, Cys-56, Cys-59, and His-60. A helical membrane pass occupies residues 286 to 306; the sequence is VQGLLFFFASVILAQVFLVLK.

The protein belongs to the cytochrome f family. The 4 large subunits of the cytochrome b6-f complex are cytochrome b6, subunit IV (17 kDa polypeptide, petD), cytochrome f and the Rieske protein, while the 4 small subunits are PetG, PetL, PetM and PetN. The complex functions as a dimer. Requires heme as cofactor.

The protein localises to the plastid. The protein resides in the chloroplast thylakoid membrane. In terms of biological role, component of the cytochrome b6-f complex, which mediates electron transfer between photosystem II (PSII) and photosystem I (PSI), cyclic electron flow around PSI, and state transitions. This Hordeum vulgare (Barley) protein is Cytochrome f.